The following is an 865-amino-acid chain: DNA mismatch repair protein MutS (865 aa).

605–612 (GPNMAGKS) contacts ATP. Positions 814-833 (PEPLEAYKPKGNKQPLSDEE) are disordered.

It belongs to the DNA mismatch repair MutS family.

This protein is involved in the repair of mismatches in DNA. It is possible that it carries out the mismatch recognition step. This protein has a weak ATPase activity. The sequence is that of DNA mismatch repair protein MutS from Halalkalibacterium halodurans (strain ATCC BAA-125 / DSM 18197 / FERM 7344 / JCM 9153 / C-125) (Bacillus halodurans).